The sequence spans 488 residues: Glutamyl-tRNA(Gln) amidotransferase subunit A (488 aa).

Catalysis depends on charge relay system residues K77 and S152. The active-site Acyl-ester intermediate is the S176.

The protein belongs to the amidase family. GatA subfamily. As to quaternary structure, heterotrimer of A, B and C subunits.

The catalysed reaction is L-glutamyl-tRNA(Gln) + L-glutamine + ATP + H2O = L-glutaminyl-tRNA(Gln) + L-glutamate + ADP + phosphate + H(+). Allows the formation of correctly charged Gln-tRNA(Gln) through the transamidation of misacylated Glu-tRNA(Gln) in organisms which lack glutaminyl-tRNA synthetase. The reaction takes place in the presence of glutamine and ATP through an activated gamma-phospho-Glu-tRNA(Gln). The sequence is that of Glutamyl-tRNA(Gln) amidotransferase subunit A from Streptococcus pyogenes serotype M4 (strain MGAS10750).